Reading from the N-terminus, the 361-residue chain is Peptide chain release factor 1 (361 aa).

Gln-237 carries the post-translational modification N5-methylglutamine.

The protein belongs to the prokaryotic/mitochondrial release factor family. Methylated by PrmC. Methylation increases the termination efficiency of RF1.

It localises to the cytoplasm. Functionally, peptide chain release factor 1 directs the termination of translation in response to the peptide chain termination codons UAG and UAA. This Alcanivorax borkumensis (strain ATCC 700651 / DSM 11573 / NCIMB 13689 / SK2) protein is Peptide chain release factor 1.